Reading from the N-terminus, the 295-residue chain is G1/S-specific cyclin-D1 (295 aa).

Positions 28–152 (LRAMLKAEET…LLVNKLKWNL (125 aa)) constitute a Cyclin N-terminal domain. Residues 262–295 (AQQNMDPKAAEEEEEEEEEVDLACTPTDVRDVDI) are disordered. A Glycyl lysine isopeptide (Lys-Gly) (interchain with G-Cter in ubiquitin) cross-link involves residue K269. Over residues 272–282 (EEEEEEEEEVD) the composition is skewed to acidic residues. T286 carries the post-translational modification Phosphothreonine.

It belongs to the cyclin family. Cyclin D subfamily. As to quaternary structure, interacts with either CDK4 or CDK6 protein kinase to form a serine/threonine kinase holoenzyme complex. The cyclin subunit imparts substrate specificity to the complex. Component of the ternary complex CCND1/CDK4/CDKN1B required for nuclear translocation and modulation of CDK4-mediated kinase activity. Interacts directly with CDKN1B. Can form similar complexes with either CDKN1A or CDKN2A. Interacts with UHRF2; the interaction ubiquitinates CCND1 and appears to occur independently of phosphorylation. Interacts with USP2. Interacts (via cyclin N-terminal domain) with INSM1 (via N-terminal region); the interaction competes with the binding of CCND1 to CDK4 during cell cycle progression and inhibits CDK4 activity. Interacts with CDK4; the interaction is prevented with the binding of CCND1 to INSM1 during cell cycle progression. In terms of processing, phosphorylation at Thr-286 by MAP kinases is required for ubiquitination and degradation by the DCX(AMBRA1) complex. It also plays an essential role for recognition by the FBXO31 component of SCF (SKP1-cullin-F-box) protein ligase complex following DNA damage. Ubiquitinated at Lys-269 by the DCX(AMBRA1) complex during the transition from G1 to S cell phase, leading to its degradation: ubiquitination is dependent on Thr-286 phosphorylation. The DCX(AMBRA1) complex represents the major regulator of CCND1 stability during the G1/S transition. Also ubiquitinated by the SCF(FBXO4) and Cul7-RING(FBXW8) ubiquitin-protein ligase complexes. Following DNA damage it is ubiquitinated by the SCF(FBXO31) protein ligase complex. SCF(FBXO31) ubiquitination is dependent on Thr-286 phosphorylation. Ubiquitinated also by UHRF2 apparently in a phosphorylation-independent manner. Ubiquitination leads to its degradation and G1 arrest. Deubiquitinated by USP2; leading to its stabilization.

Its subcellular location is the nucleus. It localises to the cytoplasm. It is found in the nucleus membrane. In terms of biological role, regulatory component of the cyclin D1-CDK4 (DC) complex that phosphorylates and inhibits members of the retinoblastoma (RB) protein family including RB1 and regulates the cell-cycle during G(1)/S transition. Phosphorylation of RB1 allows dissociation of the transcription factor E2F from the RB/E2F complex and the subsequent transcription of E2F target genes which are responsible for the progression through the G(1) phase. Hypophosphorylates RB1 in early G(1) phase. Cyclin D-CDK4 complexes are major integrators of various mitogenenic and antimitogenic signals. Also a substrate for SMAD3, phosphorylating SMAD3 in a cell-cycle-dependent manner and repressing its transcriptional activity. Component of the ternary complex, cyclin D1/CDK4/CDKN1B, required for nuclear translocation and activity of the cyclin D-CDK4 complex. Exhibits transcriptional corepressor activity with INSM1 on the NEUROD1 and INS promoters in a cell cycle-independent manner. This Homo sapiens (Human) protein is G1/S-specific cyclin-D1.